The primary structure comprises 645 residues: Chlorophyllide a oxygenase, chloroplastic (645 aa).

The tract at residues 1–46 is disordered; that stretch reads MLPASLQRKAAAVGGRGPTNQSRVAVRVSAQPKEAPPASTPIVEDP. The stretch at 105 to 218 forms a coiled coil; it reads QARQKLEYLR…RKASDLDIKE (114 aa). The interval 258-287 is disordered; it reads ATTVTQEVPSTSYGTPVDRAPRRSKAAIRR. Residues 259–271 are compositionally biased toward polar residues; it reads TTVTQEVPSTSYG. Positions 305-406 constitute a Rieske domain; sequence WYPAEFSARL…CAEKDGFIWV (102 aa). Cysteine 346, histidine 348, cysteine 365, and histidine 368 together coordinate [2Fe-2S] cluster. Residues glutamate 446, aspartate 450, histidine 453, and histidine 458 each contribute to the Fe cation site.

It localises to the plastid. Its subcellular location is the chloroplast inner membrane. It is found in the chloroplast thylakoid membrane. It catalyses the reaction chlorophyllide a + 2 NADPH + 2 O2 + 2 H(+) = chlorophyllide b + 2 NADP(+) + 3 H2O. Its function is as follows. Catalyzes a two-step oxygenase reaction involved in the synthesis of chlorophyll b. Acts specifically on the non-esterified chlorophyllide a and not on chlorophyll a. This chain is Chlorophyllide a oxygenase, chloroplastic (CAO), found in Chlamydomonas reinhardtii (Chlamydomonas smithii).